A 76-amino-acid chain; its full sequence is MKLTCVVIVAVLFLTVWTFATADDSGNGLEKLFSNAHHEMKNPEASKLNERCLDAGEVCDIFFPTCCGYCILLFCA.

An N-terminal signal peptide occupies residues 1–22 (MKLTCVVIVAVLFLTVWTFATA). A propeptide spanning residues 23–50 (DDSGNGLEKLFSNAHHEMKNPEASKLNE) is cleaved from the precursor. Intrachain disulfides connect Cys52–Cys67, Cys59–Cys70, and Cys66–Cys75.

The protein belongs to the conotoxin O1 superfamily. As to expression, expressed by the venom duct.

The protein resides in the secreted. Omega-conotoxins act at presynaptic membranes, they bind and block voltage-gated calcium channels (Cav). This is Omega-conotoxin-like TxO1 from Conus textile (Cloth-of-gold cone).